The primary structure comprises 254 residues: Probable pectate lyase E (254 aa).

The signal sequence occupies residues 1-17 (MYQPLLLLPLLLTSAFA). Asn-175 carries an N-linked (GlcNAc...) asparagine glycan. The interval 227-254 (TDNNDKEPKKKGSGPSNACKYKEPLSKC) is disordered.

The protein belongs to the polysaccharide lyase 3 family. Ca(2+) is required as a cofactor.

Its subcellular location is the secreted. The enzyme catalyses Eliminative cleavage of (1-&gt;4)-alpha-D-galacturonan to give oligosaccharides with 4-deoxy-alpha-D-galact-4-enuronosyl groups at their non-reducing ends.. Pectinolytic enzyme consist of four classes of enzymes: pectin lyase, polygalacturonase, pectin methylesterase and rhamnogalacturonase. Among pectinolytic enzymes, pectin lyase is the most important in depolymerization of pectin, since it cleaves internal glycosidic bonds of highly methylated pectins. Favors pectate, the anion, over pectin, the methyl ester. This chain is Probable pectate lyase E (plyE), found in Neosartorya fischeri (strain ATCC 1020 / DSM 3700 / CBS 544.65 / FGSC A1164 / JCM 1740 / NRRL 181 / WB 181) (Aspergillus fischerianus).